A 384-amino-acid polypeptide reads, in one-letter code: Organic solute transporter alpha-like protein 1 (384 aa).

The Extracellular portion of the chain corresponds to 1–38; sequence MEIVKTIIPHNRSYIEPPIPSATEWLANMSVMHVSCLT. Residues asparagine 11 and asparagine 28 are each glycosylated (N-linked (GlcNAc...) asparagine). Residues 39–59 traverse the membrane as a helical segment; the sequence is IACVFVAITFLSSFFHLFFVL. At 60-70 the chain is on the cytoplasmic side; it reads KYVSNERIRND. A helical transmembrane segment spans residues 71 to 91; that stretch reads MYALIFMFPITTFASLVGMFI. Residues 92 to 93 lie on the Extracellular side of the membrane; sequence PR. The helical transmembrane segment at 94–114 threads the bilayer; sequence AAIFLYAVSLVYFMFTLFIMV. Over 115–165 the chain is Cytoplasmic; the sequence is TLLFNIFGGRQEMSAYLLQRNIRVNFTVPPLCFFKFLPTVESTDQNLRRIE. The chain crosses the membrane as a helical span at residues 166 to 186; the sequence is WLVFQTPIIRTLLELVSVVVS. The Extracellular segment spans residues 187-202; that stretch reads MEQEGRRESVWFVFSQ. A helical transmembrane segment spans residues 203 to 223; that stretch reads LMALLSMCIAFYGCYVMVPLG. Over 224 to 240 the chain is Cytoplasmic; sequence REKHAPYRFDFLFRTCD. Residues 241-261 traverse the membrane as a helical segment; that stretch reads IAQCIYTIQKFVFEFAAAVGL. At 262 to 273 the chain is on the extracellular side; sequence ITSDRYLPAAAK. The helical transmembrane segment at 274–294 threads the bilayer; that stretch reads ALWWASFMCTWEMMLLSALCS. The Cytoplasmic segment spans residues 295-384; it reads YCLRPAKCKF…FDSLSQIQGQ (90 aa).

It belongs to the OST-alpha family.

The protein resides in the cell membrane. In terms of biological role, probable transporter. The sequence is that of Organic solute transporter alpha-like protein 1 (osta-1) from Caenorhabditis elegans.